A 295-amino-acid polypeptide reads, in one-letter code: MEIRRRPPNPKVKVANLEYAIPHEDGEPRNILEKILWEKDREVKVSRERVPLSELKAQINNLPQTKDFLGALRQSSTSPAVIAEIKKASPSKGVIRENFDPIEIALAYKLGGATCLSVLTDKSFFQGGFEVLVQVRKTVDLPLLCKEFIIQPYQIYQARVAGADAVLLIAAILSDQDLLYLRKVAISLGLTILVEVHDSNELKRVLDLEGFPLVGINNRDLKTFNTDLRTTKEVVKEHKKRISEQEVLLVSESGLFNSADLEEVSSYGAKAVLVGESLMRQPDIGLALKNLQGFK.

It belongs to the TrpC family.

It catalyses the reaction 1-(2-carboxyphenylamino)-1-deoxy-D-ribulose 5-phosphate + H(+) = (1S,2R)-1-C-(indol-3-yl)glycerol 3-phosphate + CO2 + H2O. Its pathway is amino-acid biosynthesis; L-tryptophan biosynthesis; L-tryptophan from chorismate: step 4/5. The protein is Indole-3-glycerol phosphate synthase of Prochlorococcus marinus (strain MIT 9211).